Reading from the N-terminus, the 329-residue chain is Short-chain dehydrogenase/reductase prx4 (329 aa).

NADP(+) is bound by residues S58, I60, and N81. A glycan (N-linked (GlcNAc...) asparagine) is linked at N91. Residues D98, N121, K161, Y194, K198, and T229 each contribute to the NADP(+) site. The Proton acceptor role is filled by Y194. Catalysis depends on K198, which acts as the Lowers pKa of active site Tyr. The helical transmembrane segment at 238–258 (GPLMAAGLPVSSAHMVGLAVV) threads the bilayer.

This sequence belongs to the short-chain dehydrogenases/reductases (SDR) family.

The protein localises to the membrane. It participates in sesquiterpene biosynthesis. Short-chain dehydrogenase/reductase; part of the gene cluster that mediates the biosynthesis of PR-toxin, a bicyclic sesquiterpene belonging to the eremophilane class and acting as a mycotoxin. The first step of the pathway is catalyzed by the aristolochene synthase which performs the cyclization of trans,trans-farnesyl diphosphate (FPP) to the bicyclic sesquiterpene aristolochene. Following the formation of aristolochene, the non-oxygenated aristolochene is converted to the trioxygenated intermediate eremofortin B, via 7-epi-neopetasone. This conversion appears to involve three enzymes, a hydroxysterol oxidase-like enzyme, the quinone-oxidase prx3 that forms the quinone-type-structure in the bicyclic nucleus of aristolochene with the C8-oxo group and the C-3 hydroxyl group, and the P450 monooxygenase ORF6 that introduces the epoxide at the double bond between carbons 1 and 2. No monoxy or dioxy-intermediates have been reported to be released to the broth, so these three early oxidative reactions may be coupled together. Eremofortin B is further oxidized by another P450 monooxygenase, that introduces a second epoxide between carbons 7 and 11 prior to acetylation to eremofortin A by the acetyltransferase ORF8. The second epoxidation may be performed by a second P450 monooxygenase. After the acetylation step, eremofortin A is converted to eremofortin C and then to PR-toxin. First the conversion of eremofortin A to eremofortin C proceeds by oxidation of the side chain of the molecule at C-12 and is catalyzed by the short-chain oxidoreductase prx1. The cytochrome P450 monooxygenase ORF6 is probably also involved in this step. The primary alcohol formed at C-12 is finally oxidized by the short-chain alcohol dehydrogenase prx4 that forms PR-toxin. This chain is Short-chain dehydrogenase/reductase prx4, found in Penicillium roqueforti.